Reading from the N-terminus, the 239-residue chain is SkfA peptide export ATP-binding protein SkfE (239 aa).

The ABC transporter domain maps to 4–232 (MQVQNLSKCY…AEWRKEVIRL (229 aa)). 36-43 (GPNGAGKT) provides a ligand contact to ATP.

The protein belongs to the ABC transporter superfamily. SkfA peptide export (TC 3.A.1.128.1) family.

Its subcellular location is the cell membrane. The catalysed reaction is sulfate(out) + ATP + H2O = sulfate(in) + ADP + phosphate + H(+). The enzyme catalyses thiosulfate(out) + ATP + H2O = thiosulfate(in) + ADP + phosphate + H(+). Probably part of the ABC transporter SkfEF involved in the export of the bacteriocin SKF. Probably responsible for energy coupling to the transport system. This chain is SkfA peptide export ATP-binding protein SkfE, found in Bacillus subtilis (strain 168).